Consider the following 331-residue polypeptide: Tetraacyldisaccharide 4'-kinase (331 aa).

55–62 (SVGGNGKT) provides a ligand contact to ATP.

It belongs to the LpxK family.

It carries out the reaction a lipid A disaccharide + ATP = a lipid IVA + ADP + H(+). It participates in glycolipid biosynthesis; lipid IV(A) biosynthesis; lipid IV(A) from (3R)-3-hydroxytetradecanoyl-[acyl-carrier-protein] and UDP-N-acetyl-alpha-D-glucosamine: step 6/6. Its function is as follows. Transfers the gamma-phosphate of ATP to the 4'-position of a tetraacyldisaccharide 1-phosphate intermediate (termed DS-1-P) to form tetraacyldisaccharide 1,4'-bis-phosphate (lipid IVA). In Aeromonas salmonicida (strain A449), this protein is Tetraacyldisaccharide 4'-kinase.